Consider the following 182-residue polypeptide: Gas vesicle protein H1 (182 aa).

Residues 1 to 11 (MVPDENDDASD) show a composition bias toward acidic residues. 2 disordered regions span residues 1 to 21 (MVPD…SGLL) and 65 to 106 (GRAD…GGTS). Positions 12–21 (DQSSQLSGLL) are enriched in low complexity. The segment covering 92–101 (TTEDSIHVET) has biased composition (basic and acidic residues).

The protein belongs to the gas vesicle GvpH family. In terms of assembly, gvpF to GvpM interact with each other in vitro, and may form multi-subunit complex(es). Interacts with GvpC1. Might interact with GvpA1.

It is found in the cytoplasm. Its subcellular location is the gas vesicle. Its function is as follows. Proteins GvpF to GvpM might be involved in nucleating gas vesicle formation. May be important for the stability of gas vesicles. Gas vesicles are hollow, gas filled proteinaceous nanostructures found in several microbial planktonic microorganisms. They allow positioning of halobacteria at the optimal depth for growth in the poorly aerated, shallow brine pools of their habitat. Functionally, expression of a 9.5 kb p-vac DNA fragment containing 2 divergently transcribed regions (gvpD-gvpE-gvpF-gvpG-gvpH-gvpI-gvpJ-gvpK-gvpL-gvpM and gvpA-gvpC-gvpN-gvpO) allows H.volcanii to produce gas vesicles. A similar region restores gas vesicle production in H.halobium without the p-vac locus, but it still has the c-vac locus. This chain is Gas vesicle protein H1 (gvpH11), found in Halobacterium salinarum (strain ATCC 700922 / JCM 11081 / NRC-1) (Halobacterium halobium).